The following is a 131-amino-acid chain: Large ribosomal subunit protein bL17 (131 aa).

It belongs to the bacterial ribosomal protein bL17 family. As to quaternary structure, part of the 50S ribosomal subunit. Contacts protein L32.

In Teredinibacter turnerae (strain ATCC 39867 / T7901), this protein is Large ribosomal subunit protein bL17.